A 3023-amino-acid chain; its full sequence is Genome polyprotein (3023 aa).

The region spanning Thr-132–Phe-274 is the Peptidase S30 domain. Residues His-183, Asp-192, and Ser-225 each act as for P1 proteinase activity in the active site. The Involved in interaction with stylet and aphid transmission motif lies at Lys-325–Cys-328. The Involved in virions binding and aphid transmission signature appears at Pro-583 to Lys-585. The Peptidase C6 domain maps to Met-609–Gly-731. Residues Cys-617 and His-690 each act as for helper component proteinase activity in the active site. The Helicase ATP-binding domain occupies Gln-1202 to Glu-1354. Residue Gly-1215–Ser-1222 participates in ATP binding. A DEFH box motif is present at residues Asp-1304–His-1307. The 166-residue stretch at Gly-1367–Ser-1532 folds into the Helicase C-terminal domain. A GxxxG motif motif is present at residues Gly-1796–Gly-1800. Residues Lys-1856 to Lys-1863 carry the Nuclear localization signal motif. Tyr-1878 carries the O-(5'-phospho-RNA)-tyrosine modification. Tyr-1878 is subject to O-UMP-tyrosine; transient. The 217-residue stretch at Ser-2002–Glu-2218 folds into the Peptidase C4 domain. Residues His-2047, Asp-2082, and Cys-2152 each act as for nuclear inclusion protein A activity in the active site. The RdRp catalytic domain occupies Trp-2484–Leu-2608. Thr-3006 is modified (phosphothreonine).

The protein belongs to the potyviridae genome polyprotein family. Interacts with host eIF4E protein (via cap-binding region); this interaction mediates the translation of the VPg-viral RNA conjugates. Part of a complex that comprises VPg, RNA, host EIF4E and EIF4G; this interaction mediates the translation of the VPg-viral RNA conjugates. VPg is uridylylated by the polymerase and is covalently attached to the 5'-end of the genomic RNA. This uridylylated form acts as a nucleotide-peptide primer for the polymerase. In terms of processing, potyviral RNA is expressed as two polyproteins which undergo post-translational proteolytic processing. Genome polyprotein is processed by NIa-pro, P1 and HC-pro proteinases resulting in the production of at least ten individual proteins. P3N-PIPO polyprotein is cleaved by P1 and HC-pro proteinases resulting in the production of three individual proteins. The P1 proteinase and the HC-pro cleave only their respective C-termini autocatalytically. 6K1 is essential for proper proteolytic separation of P3 from CI.

It is found in the host cytoplasmic vesicle. The protein localises to the host nucleus. Its subcellular location is the virion. The catalysed reaction is RNA(n) + a ribonucleoside 5'-triphosphate = RNA(n+1) + diphosphate. The enzyme catalyses Hydrolyzes glutaminyl bonds, and activity is further restricted by preferences for the amino acids in P6 - P1' that vary with the species of potyvirus, e.g. Glu-Xaa-Xaa-Tyr-Xaa-Gln-|-(Ser or Gly) for the enzyme from tobacco etch virus. The natural substrate is the viral polyprotein, but other proteins and oligopeptides containing the appropriate consensus sequence are also cleaved.. It carries out the reaction Hydrolyzes a Gly-|-Gly bond at its own C-terminus, commonly in the sequence -Tyr-Xaa-Val-Gly-|-Gly, in the processing of the potyviral polyprotein.. In terms of biological role, required for aphid transmission and also has proteolytic activity. Only cleaves a Gly-Gly dipeptide at its own C-terminus. Interacts with virions and aphid stylets. Acts as a suppressor of RNA-mediated gene silencing, also known as post-transcriptional gene silencing (PTGS), a mechanism of plant viral defense that limits the accumulation of viral RNAs. May have RNA-binding activity. Its function is as follows. Has helicase activity. It may be involved in replication. Functionally, indispensable for virus replication. Reduces the abundance of host transcripts related to jasmonic acid biosynthesis therefore altering the host defenses. In order to increase its own stability, decreases host protein degradation pathways. Indispensable for virus replication. In terms of biological role, mediates the cap-independent, EIF4E-dependent translation of viral genomic RNAs. Binds to the cap-binding site of host EIF4E and thus interferes with the host EIF4E-dependent mRNA export and translation. VPg-RNA directly binds EIF4E and is a template for transcription. Also forms trimeric complexes with EIF4E-EIF4G, which are templates for translation. Its function is as follows. Has RNA-binding and proteolytic activities. Main protease that processes most of the polyprotein cleavages. Functionally, an RNA-dependent RNA polymerase that plays an essential role in the virus replication. Involved in aphid transmission, cell-to-cell and systemis movement, encapsidation of the viral RNA and in the regulation of viral RNA amplification. The protein is Genome polyprotein of Tobacco vein mottling virus (TVMV).